Reading from the N-terminus, the 87-residue chain is UPF0250 protein SG0794 (87 aa).

It belongs to the UPF0250 family.

The sequence is that of UPF0250 protein SG0794 from Sodalis glossinidius (strain morsitans).